The chain runs to 93 residues: Integration host factor subunit beta (93 aa).

It belongs to the bacterial histone-like protein family. In terms of assembly, heterodimer of an alpha and a beta chain.

In terms of biological role, this protein is one of the two subunits of integration host factor, a specific DNA-binding protein that functions in genetic recombination as well as in transcriptional and translational control. The sequence is that of Integration host factor subunit beta from Vibrio vulnificus (strain YJ016).